Here is a 499-residue protein sequence, read N- to C-terminus: Probable cytosol aminopeptidase (499 aa).

Positions 269 and 274 each coordinate Mn(2+). Residue Lys281 is part of the active site. Residues Asp292, Asp351, and Glu353 each contribute to the Mn(2+) site. The active site involves Arg355.

Belongs to the peptidase M17 family. The cofactor is Mn(2+).

It localises to the cytoplasm. The catalysed reaction is Release of an N-terminal amino acid, Xaa-|-Yaa-, in which Xaa is preferably Leu, but may be other amino acids including Pro although not Arg or Lys, and Yaa may be Pro. Amino acid amides and methyl esters are also readily hydrolyzed, but rates on arylamides are exceedingly low.. It carries out the reaction Release of an N-terminal amino acid, preferentially leucine, but not glutamic or aspartic acids.. Its function is as follows. Presumably involved in the processing and regular turnover of intracellular proteins. Catalyzes the removal of unsubstituted N-terminal amino acids from various peptides. This Actinobacillus pleuropneumoniae serotype 3 (strain JL03) protein is Probable cytosol aminopeptidase.